Here is a 161-residue protein sequence, read N- to C-terminus: Ribonuclease H (161 aa).

The 144-residue stretch at 12 to 155 (QPQHVVIYTD…ADALANKGVE (144 aa)) folds into the RNase H type-1 domain. Mg(2+) is bound by residues Asp-21, Glu-59, Asp-81, and Asp-147.

It belongs to the RNase H family. As to quaternary structure, monomer. It depends on Mg(2+) as a cofactor.

The protein localises to the cytoplasm. It catalyses the reaction Endonucleolytic cleavage to 5'-phosphomonoester.. Its function is as follows. Endonuclease that specifically degrades the RNA of RNA-DNA hybrids. The protein is Ribonuclease H of Polaromonas naphthalenivorans (strain CJ2).